We begin with the raw amino-acid sequence, 121 residues long: MVRILANGEIVQDDDPRVRTTTQPPRGSIPRQSFFNRGHGAPPGGPGPRQQQAGARLGAAQSPFNDLNRQLVNMGFPQWHLGNHAVEPVTSILLLFLLMMLGVRGLLLVGLVYLVSHLSQR.

The disordered stretch occupies residues 12–58; sequence QDDDPRVRTTTQPPRGSIPRQSFFNRGHGAPPGGPGPRQQQAGARLG. The segment covering 19–35 has biased composition (polar residues); sequence RTTTQPPRGSIPRQSFF. Position 33 is a phosphoserine (Ser33). The span at 48 to 58 shows a compositional bias: low complexity; that stretch reads PRQQQAGARLG. A Phosphoserine modification is found at Ser62. The helical transmembrane segment at 92–112 threads the bilayer; sequence ILLLFLLMMLGVRGLLLVGLV.

It belongs to the FAM241 family.

It is found in the membrane. Functionally, may play a role in lysosome homeostasis. The polypeptide is Protein FAM241B (Homo sapiens (Human)).